A 568-amino-acid polypeptide reads, in one-letter code: Envelope glycoprotein E (568 aa).

An N-terminal signal peptide occupies residues 1–20; sequence MMPATLAGLALAVTVATMFA. Over 21–422 the chain is Virion surface; that stretch reads QRVDSTTIHH…GGGPGNSKRR (402 aa). N-linked (GlcNAc...) asparagine; by host glycans are attached at residues Asn-88, Asn-179, and Asn-248. Cys-271 and Cys-280 are oxidised to a cystine. Residues 423–443 form a helical membrane-spanning segment; that stretch reads AAVLGAAVWIALTLLILGGLG. The Intravirion segment spans residues 444 to 568; it reads AYVAVNKKCL…ANKTFPSQRY (125 aa). The Internalization motif motif lies at 465–468; sequence KPTL. The disordered stretch occupies residues 470–534; the sequence is THAHTYTSLP…SRRNSFGPTL (65 aa). The acidic stretch occupies residues 482-497; it reads GDLSLEQDAEDEDEDE. Residues 486–500 show a composition bias toward acidic residues; that stretch reads LEQDAEDEDEDEEEL. Positions 515-526 are enriched in basic residues; sequence KSSRSPSRRSSR.

This sequence belongs to the alphaherpesvirinae glycoprotein E family. Interacts with gI. Phosphorylated on serines within the acidic cluster. Phosphorylation determines whether endocytosed viral gE traffics to the trans-Golgi network or recycles to the cell membrane.

The protein localises to the virion membrane. It is found in the host cell membrane. It localises to the host cell junction. The protein resides in the host Golgi apparatus membrane. Its subcellular location is the host endosome membrane. Its function is as follows. In epithelial cells, the heterodimer gE/gI is required for the cell-to-cell spread of the virus, by sorting nascent virions to cell junctions. Once the virus reaches the cell junctions, virus particles can spread to adjacent cells extremely rapidly through interactions with cellular receptors that accumulate at these junctions. Implicated in basolateral spread in polarized cells. In neuronal cells, gE/gI is essential for the anterograde spread of the infection throughout the host nervous system. Together with US9, the heterodimer gE/gI is involved in the sorting and transport of viral structural components toward axon tips. This chain is Envelope glycoprotein E (US8), found in Psittacid herpesvirus 1 (isolate Amazon parrot/-/97-0001/1997) (PsHV-1).